Consider the following 968-residue polypeptide: Dynein axonemal intermediate chain 3 (968 aa).

Basic and acidic residues predominate over residues 1 to 33 (MKDTSSKRPKSKEANKKKTKDKSNADNLPKPEE). Disordered stretches follow at residues 1 to 39 (MKDT…ASEP) and 136 to 166 (KPPA…PEPQ). Positions 141 to 157 (GADEQMEDEEQQEEEEE) are enriched in acidic residues. WD repeat units follow at residues 407-447 (ECPD…DRLQ), 480-536 (GHKA…VMVH), and 712-753 (VYSK…RQPS). Residues 830–857 (LHTHTDQLRVLEERVREAKQNLLAVSDR) adopt a coiled-coil conformation. The span at 897-919 (KRQSDHQKKKKETEAEQQKKKTE) shows a compositional bias: basic and acidic residues. The tract at residues 897 to 930 (KRQSDHQKKKKETEAEQQKKKTELVTPPKQEEEV) is disordered.

As to quaternary structure, part of the multisubunit axonemal dynein complex formed at least of two heavy chains and a number of intermediate and light chains.

The protein localises to the cytoplasm. In terms of biological role, may be involved in the regulation of cilia function. The polypeptide is Dynein axonemal intermediate chain 3 (dnai3) (Danio rerio (Zebrafish)).